The chain runs to 461 residues: Zinc transporter 6 (461 aa).

Over Met1–Lys33 the chain is Cytoplasmic. A helical transmembrane segment spans residues Ile34 to Ser54. Residues Thr55–Thr64 are Extracellular-facing. The helical transmembrane segment at Tyr65–Leu85 threads the bilayer. At Arg86–Arg98 the chain is on the cytoplasmic side. A helical transmembrane segment spans residues Leu99–Leu119. Topologically, residues Lys120 to Thr134 are extracellular. Residues Gly135–Ile155 traverse the membrane as a helical segment. The Cytoplasmic portion of the chain corresponds to Arg156–Pro200. The chain crosses the membrane as a helical span at residues Phe201 to Ile221. Over Asn222–Asn223 the chain is Extracellular. A helical membrane pass occupies residues Tyr224–Tyr244. Residues Pro245–Pro461 are Cytoplasmic-facing. The interval Asn371 to Pro392 is disordered.

The protein belongs to the cation diffusion facilitator (CDF) transporter (TC 2.A.4) family. SLC30A subfamily. In terms of assembly, heterodimer with SLC30A5; form a functional zinc ion transmembrane transporter. In terms of tissue distribution, expressed in brain; especially in cerebellum, hippocampus, parahippocampal gyrus, superior and middle temporal gyrus. Also expressed in B-cells, colon, eye, and lung. Lower expression was present in bone, brain, cervix, ear, heart, kidney, muscle, nerve, pancreas, prostate, skin, stomach, and testis.

It localises to the golgi apparatus. It is found in the trans-Golgi network membrane. Functionally, has probably no intrinsic transporter activity but together with SLC30A5 forms a functional zinc ion:proton antiporter heterodimer, mediating zinc entry into the lumen of organelles along the secretory pathway. As part of that zinc ion:proton antiporter, contributes to zinc ion homeostasis within the early secretory pathway and regulates the activation and folding of enzymes like alkaline phosphatases and enzymes involved in phosphatidylinositol glycan anchor biosynthesis. The protein is Zinc transporter 6 of Homo sapiens (Human).